The chain runs to 75 residues: UPF0352 protein YPTB1297 (75 aa).

The protein belongs to the UPF0352 family.

This Yersinia pseudotuberculosis serotype I (strain IP32953) protein is UPF0352 protein YPTB1297.